The primary structure comprises 176 residues: Pituitary adenylate cyclase-activating polypeptide (176 aa).

A signal peptide spans 1 to 24 (MTMCSGARLALLVYGIIMHSSVYS). A propeptide spanning residues 25-79 (SPAAAGLRFPGIRPEEEAYGEDGNPLPDFDGSEPPGAGSPASAPRAAAAWYRPAG) is cleaved from the precursor. Positions 39–68 (EEEAYGEDGNPLPDFDGSEPPGAGSPASAP) are disordered. A compositionally biased stretch (low complexity) spans 56-68 (SEPPGAGSPASAP). Positions 150-158 (VKKYLAAVL) are important for receptor binding. At leucine 158 the chain carries Leucine amide. Lysine 169 carries the post-translational modification Lysine amide. Positions 173 to 176 (IAYL) are excised as a propeptide.

This sequence belongs to the glucagon family.

It localises to the secreted. PACAP is a neuropeptide involved in diverse array of physiological processes through activating the PACAP subfamily of class B1 G protein-coupled receptors: VIP receptor 1 (VIPR1), VIP receptor 2 (VIPR2), and PACAP type I receptor (ADCYAP1R1). Exerts neuroprotective and general cytoprotective effects due to anti-apoptotic, anti-inflammatory, and antioxidant actions. Promotes neuron projection development through the RAPGEF2/Rap1/B-Raf/ERK pathway. In chromaffin cells, induces long-lasting increase of intracellular calcium concentrations and neuroendocrine secretion. Involved in the control of glucose homeostasis, induces insulin secretion by pancreatic beta cells. PACAP exists in two bioactive forms from proteolysis of the same precursor protein, PACAP27 and PACAP38, which differ by eleven amino acid residues in the C-terminus. The protein is Pituitary adenylate cyclase-activating polypeptide of Homo sapiens (Human).